Here is a 303-residue protein sequence, read N- to C-terminus: N-acetyl-D-glucosamine kinase (303 aa).

ATP contacts are provided by residues 4–11 and 133–140; these read GFDIGGTK and GVGGGLIF. Zn(2+) is bound by residues His-157, Cys-177, Cys-179, and Cys-184.

The protein belongs to the ROK (NagC/XylR) family. NagK subfamily.

The catalysed reaction is N-acetyl-D-glucosamine + ATP = N-acetyl-D-glucosamine 6-phosphate + ADP + H(+). Its pathway is cell wall biogenesis; peptidoglycan recycling. Catalyzes the phosphorylation of N-acetyl-D-glucosamine (GlcNAc) derived from cell-wall degradation, yielding GlcNAc-6-P. This chain is N-acetyl-D-glucosamine kinase, found in Escherichia coli O157:H7.